A 125-amino-acid chain; its full sequence is Small ribosomal subunit protein uS13 (125 aa).

The interval Pro-97–Ser-125 is disordered. Basic residues predominate over residues Gln-101–Ser-125.

The protein belongs to the universal ribosomal protein uS13 family. Part of the 30S ribosomal subunit. Forms a loose heterodimer with protein S19. Forms two bridges to the 50S subunit in the 70S ribosome.

Its function is as follows. Located at the top of the head of the 30S subunit, it contacts several helices of the 16S rRNA. In the 70S ribosome it contacts the 23S rRNA (bridge B1a) and protein L5 of the 50S subunit (bridge B1b), connecting the 2 subunits; these bridges are implicated in subunit movement. Contacts the tRNAs in the A and P-sites. This Thermotoga neapolitana (strain ATCC 49049 / DSM 4359 / NBRC 107923 / NS-E) protein is Small ribosomal subunit protein uS13.